The chain runs to 596 residues: Deuterosome assembly protein 1 (596 aa).

Coiled coils occupy residues 8-68 (IARN…NHEI), 130-180 (CELQ…FQKE), and 227-284 (IENL…DLLR). Over residues 297 to 306 (TANLANQKTA) the composition is skewed to polar residues. Residues 297-316 (TANLANQKTAQGEEASFQVT) are disordered. Residues 337 to 402 (SEKYQAENDL…LKGAQNRQTS (66 aa)) are a coiled coil. Residues 447–467 (DKPQKHRSFHGENNSLKPTNY) form a disordered region. The segment covering 457–467 (GENNSLKPTNY) has biased composition (polar residues).

This sequence belongs to the CEP63 family.

Its subcellular location is the cytoplasm. Functionally, key structural component of the deuterosome, a structure that promotes de novo centriole amplification in multiciliated cells. Deuterosome-mediated centriole amplification occurs in terminally differentiated multiciliated cells and can generate more than 100 centrioles. Probably sufficient for the specification and formation of the deuterosome inner core. This Xenopus tropicalis (Western clawed frog) protein is Deuterosome assembly protein 1.